The following is a 327-amino-acid chain: UDP-glucose 4-epimerase (327 aa).

T119 contacts substrate. The active-site Proton acceptor is the Y143.

Belongs to the NAD(P)-dependent epimerase/dehydratase family. The cofactor is NAD(+).

It carries out the reaction UDP-alpha-D-glucose = UDP-alpha-D-galactose. Its pathway is carbohydrate metabolism; galactose metabolism. It functions in the pathway glycan metabolism; exopolysaccharide biosynthesis. The chain is UDP-glucose 4-epimerase (exoB) from Rhizobium leguminosarum bv. trifolii.